The chain runs to 438 residues: Glucose-6-phosphate isomerase (438 aa).

The active-site Proton donor is E289. Residues H310 and K424 contribute to the active site.

This sequence belongs to the GPI family.

It localises to the cytoplasm. The catalysed reaction is alpha-D-glucose 6-phosphate = beta-D-fructose 6-phosphate. It functions in the pathway carbohydrate biosynthesis; gluconeogenesis. The protein operates within carbohydrate degradation; glycolysis; D-glyceraldehyde 3-phosphate and glycerone phosphate from D-glucose: step 2/4. Catalyzes the reversible isomerization of glucose-6-phosphate to fructose-6-phosphate. The sequence is that of Glucose-6-phosphate isomerase from Oenococcus oeni (strain ATCC BAA-331 / PSU-1).